Reading from the N-terminus, the 236-residue chain is Phosphoglycolate phosphatase (236 aa).

The active-site Nucleophile is D14. 3 residues coordinate Mg(2+): D14, D16, and D177.

The protein belongs to the HAD-like hydrolase superfamily. CbbY/CbbZ/Gph/YieH family. Mg(2+) serves as cofactor.

It catalyses the reaction 2-phosphoglycolate + H2O = glycolate + phosphate. Its pathway is organic acid metabolism; glycolate biosynthesis; glycolate from 2-phosphoglycolate: step 1/1. Specifically catalyzes the dephosphorylation of 2-phosphoglycolate. Is involved in the dissimilation of the intracellular 2-phosphoglycolate formed during the DNA repair of 3'-phosphoglycolate ends, a major class of DNA lesions induced by oxidative stress. This chain is Phosphoglycolate phosphatase, found in Neisseria gonorrhoeae (strain ATCC 700825 / FA 1090).